The primary structure comprises 23 residues: SLLQFEMMIMEVAKRSGIFWYSA.

The protein belongs to the phospholipase A2 family. Group II subfamily. D49 sub-subfamily. The cofactor is Ca(2+). Contains 7 disulfide bonds. Expressed by the venom gland.

Its subcellular location is the secreted. The catalysed reaction is a 1,2-diacyl-sn-glycero-3-phosphocholine + H2O = a 1-acyl-sn-glycero-3-phosphocholine + a fatty acid + H(+). Functionally, snake venom phospholipase A2 (PLA2) that shows high lipolytic (1200 umol/mg/min) and weak ADP-induced platelet aggregation activities. Also shows weak anticoagulant activity (IC(50) of about 1.0 uM). PLA2 catalyzes the calcium-dependent hydrolysis of the 2-acyl groups in 3-sn-phosphoglycerides. This chain is Acidic phospholipase A2 CHA-E6b, found in Crotalus horridus (Timber rattlesnake).